Reading from the N-terminus, the 279-residue chain is Proteasome subunit beta (279 aa).

The propeptide at 1–53 (MAAAFDPSGRLPDLFTSAGTSSFSAFLSMAAPELLPGRRPLPPGTAADLTPHA) is removed in mature form; by autocatalysis. Threonine 54 serves as the catalytic Nucleophile.

Belongs to the peptidase T1B family. As to quaternary structure, the 20S proteasome core is composed of 14 alpha and 14 beta subunits that assemble into four stacked heptameric rings, resulting in a barrel-shaped structure. The two inner rings, each composed of seven catalytic beta subunits, are sandwiched by two outer rings, each composed of seven alpha subunits. The catalytic chamber with the active sites is on the inside of the barrel. Has a gated structure, the ends of the cylinder being occluded by the N-termini of the alpha-subunits. Is capped by the proteasome-associated ATPase, ARC.

It localises to the cytoplasm. The catalysed reaction is Cleavage of peptide bonds with very broad specificity.. Its pathway is protein degradation; proteasomal Pup-dependent pathway. With respect to regulation, the formation of the proteasomal ATPase ARC-20S proteasome complex, likely via the docking of the C-termini of ARC into the intersubunit pockets in the alpha-rings, may trigger opening of the gate for substrate entry. Interconversion between the open-gate and close-gate conformations leads to a dynamic regulation of the 20S proteasome proteolysis activity. Functionally, component of the proteasome core, a large protease complex with broad specificity involved in protein degradation. The sequence is that of Proteasome subunit beta from Salinispora arenicola (strain CNS-205).